The chain runs to 255 residues: Triosephosphate isomerase (255 aa).

9 to 11 is a binding site for substrate; sequence NWK. The Electrophile role is filled by H100. E169 functions as the Proton acceptor in the catalytic mechanism. Substrate contacts are provided by residues G175, S208, and 229–230; that span reads GG.

It belongs to the triosephosphate isomerase family. As to quaternary structure, homodimer.

The protein resides in the cytoplasm. It carries out the reaction D-glyceraldehyde 3-phosphate = dihydroxyacetone phosphate. It functions in the pathway carbohydrate biosynthesis; gluconeogenesis. The protein operates within carbohydrate degradation; glycolysis; D-glyceraldehyde 3-phosphate from glycerone phosphate: step 1/1. Its function is as follows. Involved in the gluconeogenesis. Catalyzes stereospecifically the conversion of dihydroxyacetone phosphate (DHAP) to D-glyceraldehyde-3-phosphate (G3P). The chain is Triosephosphate isomerase from Synechococcus sp. (strain JA-3-3Ab) (Cyanobacteria bacterium Yellowstone A-Prime).